Reading from the N-terminus, the 863-residue chain is Nitrate reductase [NADH] (863 aa).

Residue C137 coordinates Mo-molybdopterin. The Cytochrome b5 heme-binding domain occupies 484 to 559; the sequence is KKYVTKAMLE…LEQFYIAELA (76 aa). Residues H519 and H542 each contribute to the heme site. The region spanning 602-719 is the FAD-binding FR-type domain; that stretch reads KKQKAAELKE…KGPIGHFHYD (118 aa). Residues 659–662, 676–680, F688, 693–695, and T746 each bind FAD; these read RAYT, VVKIY, and KFS.

The protein belongs to the nitrate reductase family. Homodimer. FAD serves as cofactor. The cofactor is Mo-molybdopterin. Requires heme as cofactor.

It carries out the reaction nitrite + NAD(+) + H2O = nitrate + NADH + H(+). In terms of biological role, nitrate reductase is a key enzyme involved in the first step of nitrate assimilation in plants, fungi and bacteria. The protein is Nitrate reductase [NADH] of Ulva prolifera (Green seaweed).